The primary structure comprises 103 residues: Nucleoid-associated protein A2cp1_3777 (103 aa).

This sequence belongs to the YbaB/EbfC family. As to quaternary structure, homodimer.

It localises to the cytoplasm. Its subcellular location is the nucleoid. In terms of biological role, binds to DNA and alters its conformation. May be involved in regulation of gene expression, nucleoid organization and DNA protection. The polypeptide is Nucleoid-associated protein A2cp1_3777 (Anaeromyxobacter dehalogenans (strain 2CP-1 / ATCC BAA-258)).